Consider the following 187-residue polypeptide: Adenylate kinase (187 aa).

11–16 (GAGKGT) contacts ATP. The NMP stretch occupies residues 31–60 (STGDILREAVKNQTPMGIEAKRYMDAGDLV). AMP-binding positions include Thr32, Arg37, 58–60 (DLV), 86–89 (GFPR), and Gln93. An LID region spans residues 127–137 (GRAEIEGRADD). Arg128 is an ATP binding site. The AMP site is built by Arg134 and Arg145. Gly173 provides a ligand contact to ATP.

This sequence belongs to the adenylate kinase family. As to quaternary structure, monomer.

The protein resides in the cytoplasm. It catalyses the reaction AMP + ATP = 2 ADP. The protein operates within purine metabolism; AMP biosynthesis via salvage pathway; AMP from ADP: step 1/1. Catalyzes the reversible transfer of the terminal phosphate group between ATP and AMP. Plays an important role in cellular energy homeostasis and in adenine nucleotide metabolism. In Leptospira borgpetersenii serovar Hardjo-bovis (strain JB197), this protein is Adenylate kinase.